The chain runs to 559 residues: Cation/calcium exchanger 2 (559 aa).

13 consecutive transmembrane segments (helical) span residues 10-30 (FGYLTVTFLLVISCLLLGFFT), 86-106 (GFPILGQFLLFLWLLLLFYLL), 131-151 (VAGVTLLSLGNGAPDLFASLV), 167-187 (TVVGGSGFVTCVVVGIISISL), 203-223 (ICFFCAAIGSLALILVYGKIN), 224-244 (FWGALGFCSLYAVYVAFVVLS), 331-351 (WSKPLAVASVTFAPVLLSFLW), 362-382 (AGVVYLIGCLIGIALGFIAGA), 393-413 (WLLPWLAGGFVMSMTWSYISA), 416-436 (LVALLTSLGYIFGVSPSILGL), 480-500 (FALGISLVGCAWEAYPLSIVI), 506-526 (LLESLGFLVAGLVWSFLVLFS), and 531-551 (LGGVMGIGLLVIYLASLSLRI).

Belongs to the Ca(2+):cation antiporter (CaCA) (TC 2.A.19) family. Cation/calcium exchanger (CCX) subfamily.

The protein resides in the membrane. Functionally, membrane-localized H(+)-dependent K(+) and Na(+) transporter. This Arabidopsis thaliana (Mouse-ear cress) protein is Cation/calcium exchanger 2 (CCX2).